The primary structure comprises 585 residues: Rhizobactin siderophore biosynthesis protein RhbC (585 aa).

The protein belongs to the IucA/IucC family.

Its pathway is siderophore biosynthesis; rhizobactin biosynthesis. The sequence is that of Rhizobactin siderophore biosynthesis protein RhbC (rhbC) from Rhizobium meliloti (strain 1021) (Ensifer meliloti).